We begin with the raw amino-acid sequence, 133 residues long: Small ribosomal subunit protein uS8 (133 aa).

It belongs to the universal ribosomal protein uS8 family. In terms of assembly, part of the 30S ribosomal subunit. Contacts proteins S5 and S12.

In terms of biological role, one of the primary rRNA binding proteins, it binds directly to 16S rRNA central domain where it helps coordinate assembly of the platform of the 30S subunit. This is Small ribosomal subunit protein uS8 from Chloroflexus aggregans (strain MD-66 / DSM 9485).